The following is a 240-amino-acid chain: Probable phosphatase Athe_0620 (240 aa).

Residues H8, H10, H16, H41, E74, H102, H132, D192, and H194 each contribute to the Zn(2+) site.

This sequence belongs to the PHP family. Zn(2+) is required as a cofactor.

The polypeptide is Probable phosphatase Athe_0620 (Caldicellulosiruptor bescii (strain ATCC BAA-1888 / DSM 6725 / KCTC 15123 / Z-1320) (Anaerocellum thermophilum)).